We begin with the raw amino-acid sequence, 338 residues long: Ribonucleoside-diphosphate reductase small subunit (338 aa).

Positions 81, 112, and 115 each coordinate Fe cation. Y119 is a catalytic residue. Residues E174, E208, and H211 each coordinate Fe cation.

It belongs to the ribonucleoside diphosphate reductase small chain family. Heterodimer of a large and a small subunit. The cofactor is Fe cation.

It is found in the cytoplasm. It catalyses the reaction a 2'-deoxyribonucleoside 5'-diphosphate + [thioredoxin]-disulfide + H2O = a ribonucleoside 5'-diphosphate + [thioredoxin]-dithiol. In terms of biological role, provides the precursors necessary for DNA synthesis. Catalyzes the biosynthesis of deoxyribonucleotides from the corresponding ribonucleotides. The protein is Ribonucleoside-diphosphate reductase small subunit (rnrB-1) of Dictyostelium discoideum (Social amoeba).